Here is a 61-residue protein sequence, read N- to C-terminus: Large ribosomal subunit protein bL28 (61 aa).

The segment at 1–24 (MAKDYVTGKKTTFGNKRSHSLNPT) is disordered. Positions 9–23 (KKTTFGNKRSHSLNP) are enriched in polar residues.

The protein belongs to the bacterial ribosomal protein bL28 family.

The polypeptide is Large ribosomal subunit protein bL28 (Lactobacillus acidophilus (strain ATCC 700396 / NCK56 / N2 / NCFM)).